We begin with the raw amino-acid sequence, 71 residues long: Augerpeptide-s7a (71 aa).

An N-terminal signal peptide occupies residues 1-20 (MSALKFVLICGLVLLLIETI). A propeptide spanning residues 21 to 29 (PGVSLNLMR) is cleaved from the precursor. 3 disulfide bridges follow: Cys36-Cys48, Cys42-Cys65, and Cys47-Cys68.

In terms of tissue distribution, expressed by the venom duct.

The protein localises to the secreted. Elicits an uncoordinated twisting syndrome when injected into C.elegans, but has no effect on mice. This chain is Augerpeptide-s7a, found in Terebra subulata (Chocolate spotted auger).